We begin with the raw amino-acid sequence, 814 residues long: DNA replication licensing factor Mcm6 (814 aa).

Residues 152–179 form a C4-type zinc finger; it reads CLDCQTEIRDVEQQFKFTNPTICRNPVC. In terms of domain architecture, MCM spans 339–545; it reads LYQNLINSLF…VVDYAIARKI (207 aa). The ATP site is built by serine 392, threonine 393, alanine 394, lysine 395, serine 396, and asparagine 497. The short motif at 521–524 is the Arginine finger element; it reads SRFD. ADP-binding residues include arginine 612 and glutamate 615. The disordered stretch occupies residues 656 to 696; the sequence is DIHLDEEEGEENENVMDIGEETPEDTPRTNETEENDQDTPA. The segment covering 659-679 has biased composition (acidic residues); it reads LDEEEGEENENVMDIGEETPE.

Belongs to the MCM family. Component of the Mcm2-7 complex. The complex forms a toroidal hexameric ring with the proposed subunit order Mcm2-Mcm6-Mcm4-Mcm7-Mcm3-Mcm5 (By simililarity). The heterodimers of Mcm4/Mcm6 and Mcm3/Mcm5 interact with Mcm2 and Mcm7.

It is found in the nucleus. It carries out the reaction ATP + H2O = ADP + phosphate + H(+). Its function is as follows. Acts as a component of the MCM2-7 complex (MCM complex) which is the replicative helicase essential for 'once per cell cycle' DNA replication initiation and elongation in eukaryotic cells. Core component of CDC45-MCM-GINS (CMG) helicase, the molecular machine that unwinds template DNA during replication, and around which the replisome is built. The active ATPase sites in the MCM2-7 ring are formed through the interaction surfaces of two neighboring subunits such that a critical structure of a conserved arginine finger motif is provided in trans relative to the ATP-binding site of the Walker A box of the adjacent subunit. The six ATPase active sites, however, are likely to contribute differentially to the complex helicase activity. The polypeptide is DNA replication licensing factor Mcm6 (Anopheles gambiae (African malaria mosquito)).